The following is a 229-amino-acid chain: Flagellar L-ring protein (229 aa).

An N-terminal signal peptide occupies residues 1–25; it reads MKQVRLLPSAPVRAVCALAVAALAG. Cys26 carries N-palmitoyl cysteine lipidation. Residue Cys26 is the site of S-diacylglycerol cysteine attachment.

It belongs to the FlgH family. The basal body constitutes a major portion of the flagellar organelle and consists of four rings (L,P,S, and M) mounted on a central rod.

The protein resides in the cell outer membrane. The protein localises to the bacterial flagellum basal body. Assembles around the rod to form the L-ring and probably protects the motor/basal body from shearing forces during rotation. This chain is Flagellar L-ring protein, found in Burkholderia ambifaria (strain MC40-6).